We begin with the raw amino-acid sequence, 430 residues long: Histidinol dehydrogenase (430 aa).

3 residues coordinate NAD(+): tyrosine 130, glutamine 191, and asparagine 214. Serine 237, glutamine 259, and histidine 262 together coordinate substrate. Zn(2+)-binding residues include glutamine 259 and histidine 262. Residues glutamate 327 and histidine 328 each act as proton acceptor in the active site. Positions 328, 361, 415, and 420 each coordinate substrate. Aspartate 361 contacts Zn(2+). Histidine 420 is a binding site for Zn(2+).

It belongs to the histidinol dehydrogenase family. It depends on Zn(2+) as a cofactor.

The catalysed reaction is L-histidinol + 2 NAD(+) + H2O = L-histidine + 2 NADH + 3 H(+). It participates in amino-acid biosynthesis; L-histidine biosynthesis; L-histidine from 5-phospho-alpha-D-ribose 1-diphosphate: step 9/9. In terms of biological role, catalyzes the sequential NAD-dependent oxidations of L-histidinol to L-histidinaldehyde and then to L-histidine. The protein is Histidinol dehydrogenase of Brucella melitensis biotype 1 (strain ATCC 23456 / CCUG 17765 / NCTC 10094 / 16M).